The chain runs to 1212 residues: Nucleolar protein 6 (1212 aa).

2 disordered regions span residues 1–72 (MGKI…PVSI) and 1156–1212 (KREQ…KSLS). The span at 1197–1212 (LKRKSLIKSRPLKSLS) shows a compositional bias: basic residues.

This sequence belongs to the NRAP family. As to quaternary structure, part of the small subunit (SSU) processome, composed of more than 70 proteins and the RNA chaperone small nucleolar RNA (snoRNA) U3.

The protein resides in the nucleus. The protein localises to the nucleolus. It localises to the chromosome. Its function is as follows. Part of the small subunit (SSU) processome, first precursor of the small eukaryotic ribosomal subunit. During the assembly of the SSU processome in the nucleolus, many ribosome biogenesis factors, an RNA chaperone and ribosomal proteins associate with the nascent pre-rRNA and work in concert to generate RNA folding, modifications, rearrangements and cleavage as well as targeted degradation of pre-ribosomal RNA by the RNA exosome. This Drosophila persimilis (Fruit fly) protein is Nucleolar protein 6.